The following is a 225-amino-acid chain: Small ribosomal subunit protein uS3 (225 aa).

Positions 38-106 (LRAFLRRKLS…DVALNIVEIR (69 aa)) constitute a KH type-2 domain.

It belongs to the universal ribosomal protein uS3 family. In terms of assembly, part of the 30S ribosomal subunit. Forms a tight complex with proteins S10 and S14.

In terms of biological role, binds the lower part of the 30S subunit head. Binds mRNA in the 70S ribosome, positioning it for translation. In Gluconobacter oxydans (strain 621H) (Gluconobacter suboxydans), this protein is Small ribosomal subunit protein uS3.